The following is a 511-amino-acid chain: Glucans biosynthesis protein G (511 aa).

Residues 1–22 (MMKMRWLGAAIMLTLYASSSWA) form the signal peptide.

It belongs to the OpgD/OpgG family.

The protein localises to the periplasm. It functions in the pathway glycan metabolism; osmoregulated periplasmic glucan (OPG) biosynthesis. Functionally, involved in the biosynthesis of osmoregulated periplasmic glucans (OPGs). The protein is Glucans biosynthesis protein G of Salmonella paratyphi A (strain ATCC 9150 / SARB42).